A 236-amino-acid chain; its full sequence is Small ribosomal subunit protein uS2c (236 aa).

This sequence belongs to the universal ribosomal protein uS2 family.

It localises to the plastid. The protein resides in the chloroplast. This Chloranthus spicatus (Chulantree) protein is Small ribosomal subunit protein uS2c (rps2).